Reading from the N-terminus, the 159-residue chain is Dihydrofolate reductase (159 aa).

The DHFR domain maps to 1–158 (MISLIAALAV…HSYCFEILER (158 aa)). Isoleucine 5 is a substrate binding site. NADP(+) contacts are provided by residues alanine 7 and 13–19 (VIGMENA). Aspartate 27 serves as a coordination point for substrate. Residue 45-46 (HT) coordinates NADP(+). Substrate contacts are provided by arginine 52 and arginine 57. Residues 63 to 64 (SS), lysine 76, and 95 to 102 (GGGRVYEQ) each bind NADP(+). Threonine 113 serves as a coordination point for substrate.

This sequence belongs to the dihydrofolate reductase family.

It catalyses the reaction (6S)-5,6,7,8-tetrahydrofolate + NADP(+) = 7,8-dihydrofolate + NADPH + H(+). It functions in the pathway cofactor biosynthesis; tetrahydrofolate biosynthesis; 5,6,7,8-tetrahydrofolate from 7,8-dihydrofolate: step 1/1. Functionally, key enzyme in folate metabolism. Catalyzes an essential reaction for de novo glycine and purine synthesis, and for DNA precursor synthesis. In Escherichia coli O6:H1 (strain CFT073 / ATCC 700928 / UPEC), this protein is Dihydrofolate reductase (folA).